A 493-amino-acid chain; its full sequence is Ribose import ATP-binding protein RbsA (493 aa).

2 ABC transporter domains span residues 5–241 (LKIS…VGRR) and 252–491 (EKGE…AAAI). Residue 37–44 (GENGAGKS) participates in ATP binding.

It belongs to the ABC transporter superfamily. Ribose importer (TC 3.A.1.2.1) family. The complex is composed of an ATP-binding protein (RbsA), two transmembrane proteins (RbsC) and a solute-binding protein (RbsB).

It is found in the cell inner membrane. It catalyses the reaction D-ribose(out) + ATP + H2O = D-ribose(in) + ADP + phosphate + H(+). Its function is as follows. Part of the ABC transporter complex RbsABC involved in ribose import. Responsible for energy coupling to the transport system. The sequence is that of Ribose import ATP-binding protein RbsA from Haemophilus influenzae (strain 86-028NP).